The following is a 310-amino-acid chain: MATNDAVLKRLEQKGAEADQIIEYLKQQVALLKEKAILQATMREEKKLRVENAKLKKEIEELKQELILAEIHNGVEQVRVRLSTPLQTNCTASESVVQSPSVATTASPATKEQIKAGEEKKVKEKTEKKGEKKEKQQSAAASTDSKPIDASRLDLRIGCIVTAKKHPDADSLYVEEVDVGEAAPRTVVSGLVNHVPLEQMQNRMVVLLCNLKPAKMRGVLSQAMVMCASSPEKVEILAPPNGSVPGDRITFDAFPGEPDKELNPKKKIWEQIQPDLHTNAECVATYKGAPFEVKGKGVCRAQTMANSGIK.

The residue at position 2 (alanine 2) is an N-acetylalanine. Residues 6–46 (AVLKRLEQKGAEADQIIEYLKQQVALLKEKAILQATMREEK) form a required for fibroblast proliferation region. The interaction with HSP90B1 stretch occupies residues 54-192 (KLKKEIEELK…APRTVVSGLV (139 aa)). The span at 92–110 (ASESVVQSPSVATTASPAT) shows a compositional bias: polar residues. Residues 92 to 147 (ASESVVQSPSVATTASPATKEQIKAGEEKKVKEKTEKKGEKKEKQQSAAASTDSKP) form a disordered region. The interval 101–115 (SVATTASPATKEQIK) is required for endothelial cell death. Residues 112–136 (EQIKAGEEKKVKEKTEKKGEKKEKQ) are compositionally biased toward basic and acidic residues. Residues 115-190 (KAGEEKKVKE…EAAPRTVVSG (76 aa)) are required for endothelial cell migration. Serine 138 is subject to Phosphoserine. A tRNA-binding domain is found at 149–250 (DASRLDLRIG…NGSVPGDRIT (102 aa)). Position 267 is an N6-succinyllysine (lysine 267).

As to quaternary structure, homodimer. Part of the multisynthetase complex (MSC), a multisubunit complex that groups tRNA ligases for Arg (RARS1), Asp (DARS1), Gln (QARS1), Ile (IARS1), Leu (LARS1), Lys (KARS1), Met (MARS1) the bifunctional ligase for Glu and Pro (EPRS1) and the auxiliary subunits AIMP1/p43, AIMP2/p38 and EEF1E1/p18. Interacts (via N-terminus) with RARS1 (via N-terminus). Part of a complex composed of RARS1, QARS1 and AIMP1. Interacts (via C-terminus) with SMURF2. Interacts (via N-terminus) with HSP90B1/gp96 (via C-terminus). Interacts with PSMA7. Interacts with TARS3. In terms of processing, cleaved by caspase-7 in response to apoptosis to produce EMAP-II. As to expression, highly expressed in salivary glands and pancreatic alpha cells in the adult (at protein level). In the embryo, expressed primarily at sites of tissue remodeling such as ganglia, developing bones and teeth.

The protein localises to the nucleus. It localises to the cytoplasm. It is found in the cytosol. The protein resides in the secreted. Its subcellular location is the endoplasmic reticulum. The protein localises to the golgi apparatus. In terms of biological role, non-catalytic component of the multisynthase complex. Stimulates the catalytic activity of cytoplasmic arginyl-tRNA synthase. Binds tRNA. Possesses inflammatory cytokine activity. Negatively regulates TGF-beta signaling through stabilization of SMURF2 by binding to SMURF2 and inhibiting its SMAD7-mediated degradation. Involved in glucose homeostasis through induction of glucagon secretion at low glucose levels. Promotes dermal fibroblast proliferation and wound repair. Regulates KDELR1-mediated retention of HSP90B1/gp96 in the endoplasmic reticulum. Plays a role in angiogenesis by inducing endothelial cell migration at low concentrations and endothelian cell apoptosis at high concentrations. Induces maturation of dendritic cells and monocyte cell adhesion. Modulates endothelial cell responses by degrading HIF-1A through interaction with PSMA7. This is Aminoacyl tRNA synthase complex-interacting multifunctional protein 1 (Aimp1) from Mus musculus (Mouse).